A 130-amino-acid polypeptide reads, in one-letter code: Small ribosomal subunit protein uS8 (130 aa).

It belongs to the universal ribosomal protein uS8 family. Part of the 30S ribosomal subunit. Contacts proteins S5 and S12.

In terms of biological role, one of the primary rRNA binding proteins, it binds directly to 16S rRNA central domain where it helps coordinate assembly of the platform of the 30S subunit. This is Small ribosomal subunit protein uS8 from Aliivibrio salmonicida (strain LFI1238) (Vibrio salmonicida (strain LFI1238)).